The primary structure comprises 559 residues: CRISPR-associated exonuclease Cas4/endonuclease Cas1 fusion (559 aa).

Residues 1–198 (MAETDGSIPL…RCSLVGICLP (198 aa)) are CRISPR-associated exonuclease Cas4. Cysteine 22 provides a ligand contact to [4Fe-4S] cluster. The Mn(2+) site is built by aspartate 87 and aspartate 100. [4Fe-4S] cluster is bound by residues cysteine 187, cysteine 190, and cysteine 196. The segment at 224–559 (LYVQSPKAYV…IPAYPNFVTR (336 aa)) is CRISPR-associated endonuclease Cas1. Residues glutamate 380, histidine 451, and glutamate 466 each contribute to the Mn(2+) site.

The protein in the N-terminal section; belongs to the CRISPR-associated exonuclease Cas4 family. This sequence in the C-terminal section; belongs to the CRISPR-associated endonuclease Cas1 family. In terms of assembly, homodimer, forms a heterotetramer with a Cas2 homodimer. It depends on [4Fe-4S] cluster as a cofactor. Mg(2+) serves as cofactor. The cofactor is Mn(2+).

It carries out the reaction exonucleolytic cleavage in the 5'- to 3'-direction to yield nucleoside 3'-phosphates.. Its function is as follows. CRISPR (clustered regularly interspaced short palindromic repeat), is an adaptive immune system that provides protection against mobile genetic elements (viruses, transposable elements and conjugative plasmids). CRISPR clusters contain spacers, sequences complementary to antecedent mobile elements, and target invading nucleic acids. CRISPR clusters are transcribed and processed into CRISPR RNA (crRNA). The Cas4 region acts as a ssDNA exonuclease, while the Cas1 region acts as a dsDNA endonuclease. Involved in the integration of spacer DNA into the CRISPR cassette. The protein is CRISPR-associated exonuclease Cas4/endonuclease Cas1 fusion (cas4-cas1) of Geobacter sulfurreducens (strain ATCC 51573 / DSM 12127 / PCA).